The primary structure comprises 495 residues: Oxidoreductase AflY (495 aa).

The segment at 1-22 (MGSHAPAVAGKPDPKKGPYQAT) is disordered.

This sequence belongs to the questin oxidase family.

The protein operates within mycotoxin biosynthesis; aflatoxin biosynthesis. Oxidoreductase; part of the gene cluster that mediates the biosynthesis of aflatoxins, a group of polyketide-derived furanocoumarins, and part of the most toxic and carcinogenic compounds among the known mycotoxins. The four major aflatoxins produced by A.parasiticus are aflatoxin B1 (AFB1), aflatoxin B2 (AFB2), aflatoxin G1 (AFG1) and aflatoxin G2 (AFG2). Within the aflatoxin pathway, the oxidoreductase aflY seems to be involved in the conversion of versicolorin A (VERA) to demethylsterigmatocystin (DMST), through probable Baeyer-Villiger oxidation required for the formation of the xanthone ring. The biosynthesis of aflatoxins begins with the norsolorinic acid synthase aflC that combines a hexanoyl starter unit produced by the fatty acid synthase aflA/aflB and 7 malonyl-CoA extender units to synthesize the precursor NOR. The second step is the conversion of NOR to averantin and requires the norsolorinic acid ketoreductase aflD, which catalyzes the dehydration of norsolorinic acid to form (1'S)-averantin. The norsolorinic acid reductases aflE and aflF may also play a role in the conversion of NOR to AVN. The cytochrome P450 monooxygenase aflG then catalyzes the hydroxylation of AVN to 5'hydroxyaverantin (HAVN). The next step is performed by the 5'-hydroxyaverantin dehydrogenase aflH that transforms HAVN to 5'-oxoaverantin (OAVN) which is further converted to averufin (AVF) by aflK that plays a dual role in the pathway, as a 5'-oxoaverantin cyclase that mediates conversion of 5'-oxoaverantin, as well as a versicolorin B synthase in a later step in the pathway. The averufin oxidase aflI catalyzes the conversion of AVF to versiconal hemiacetal acetate (VHA). VHA is then the substrate for the versiconal hemiacetal acetate esterase aflJ to yield versiconal (VAL). Versicolorin B synthase aflK then converts VAL to versicolorin B (VERB) by closing the bisfuran ring of aflatoxin which is required for DNA-binding, thus giving to aflatoxin its activity as a mutagen. Then, the activity of the versicolorin B desaturase aflL leads to versicolorin A (VERA). A branch point starts from VERB since it can also be converted to dihydrodemethylsterigmatocystin (DMDHST), probably also by aflL, VERA being a precursor for aflatoxins B1 and G1, and DMDHST for aflatoxins B2 and G2. Next, the versicolorin reductase aflM and the cytochrome P450 monooxygenase aflN are involved in conversion of VERA to demethylsterigmatocystin (DMST). AflX and aflY seem also involved in this step, through probable aflX-mediated epoxide ring-opening step following versicolorin A oxidation and aflY-mediated Baeyer-Villiger oxidation required for the formation of the xanthone ring. The methyltransferase aflO then leads to the modification of DMST to sterigmatocystin (ST), and of DMDHST to dihydrosterigmatocystin (DHST). Both ST and DHST are then substrates of the O-methyltransferase aflP to yield O-methylsterigmatocystin (OMST) and dihydro-O-methylsterigmatocystin (DHOMST), respectively. Finally OMST is converted to aflatoxins B1 and G1, and DHOMST to aflatoxins B2 and G2, via the action of several enzymes including O-methylsterigmatocystin oxidoreductase aflQ, the cytochrome P450 monooxygenase aflU, but also the NADH-dependent flavin oxidoreductase nadA which is specifically required for the synthesis of AFG1. This is Oxidoreductase AflY from Aspergillus parasiticus (strain ATCC 56775 / NRRL 5862 / SRRC 143 / SU-1).